The following is a 343-amino-acid chain: Holliday junction branch migration complex subunit RuvB (343 aa).

Residues M1 to Q20 form a disordered region. Positions M1–Y185 are large ATPase domain (RuvB-L). ATP-binding positions include L24, R25, G66, K69, T70, T71, E132–F134, R175, Y185, and R222. T70 contacts Mg(2+). The segment at E186 to E256 is small ATPAse domain (RuvB-S). The head domain (RuvB-H) stretch occupies residues R259–L343. R295, R314, and R319 together coordinate DNA.

This sequence belongs to the RuvB family. Homohexamer. Forms an RuvA(8)-RuvB(12)-Holliday junction (HJ) complex. HJ DNA is sandwiched between 2 RuvA tetramers; dsDNA enters through RuvA and exits via RuvB. An RuvB hexamer assembles on each DNA strand where it exits the tetramer. Each RuvB hexamer is contacted by two RuvA subunits (via domain III) on 2 adjacent RuvB subunits; this complex drives branch migration. In the full resolvosome a probable DNA-RuvA(4)-RuvB(12)-RuvC(2) complex forms which resolves the HJ.

It is found in the cytoplasm. It catalyses the reaction ATP + H2O = ADP + phosphate + H(+). The RuvA-RuvB-RuvC complex processes Holliday junction (HJ) DNA during genetic recombination and DNA repair, while the RuvA-RuvB complex plays an important role in the rescue of blocked DNA replication forks via replication fork reversal (RFR). RuvA specifically binds to HJ cruciform DNA, conferring on it an open structure. The RuvB hexamer acts as an ATP-dependent pump, pulling dsDNA into and through the RuvAB complex. RuvB forms 2 homohexamers on either side of HJ DNA bound by 1 or 2 RuvA tetramers; 4 subunits per hexamer contact DNA at a time. Coordinated motions by a converter formed by DNA-disengaged RuvB subunits stimulates ATP hydrolysis and nucleotide exchange. Immobilization of the converter enables RuvB to convert the ATP-contained energy into a lever motion, pulling 2 nucleotides of DNA out of the RuvA tetramer per ATP hydrolyzed, thus driving DNA branch migration. The RuvB motors rotate together with the DNA substrate, which together with the progressing nucleotide cycle form the mechanistic basis for DNA recombination by continuous HJ branch migration. Branch migration allows RuvC to scan DNA until it finds its consensus sequence, where it cleaves and resolves cruciform DNA. This Magnetococcus marinus (strain ATCC BAA-1437 / JCM 17883 / MC-1) protein is Holliday junction branch migration complex subunit RuvB.